The chain runs to 379 residues: Acetylajmalan esterase 1 (379 aa).

A signal peptide spans 1 to 20 (MGFAPLLVFSLFVFAGTTKG). Ser-34 serves as the catalytic Nucleophile. 4 N-linked (GlcNAc...) asparagine glycosylation sites follow: Asn-96, Asn-178, Asn-197, and Asn-291. Catalysis depends on residues Asp-332 and His-335.

Belongs to the 'GDSL' lipolytic enzyme family. Expressed in roots and leaves at low levels.

The catalysed reaction is 17-O-acetylnorajmaline + H2O = norajmaline + acetate + H(+). It carries out the reaction 17-O-acetylajmaline + H2O = ajmaline + acetate + H(+). The protein operates within alkaloid biosynthesis; ajmaline biosynthesis. In terms of biological role, acetylesterase involved in the biosynthesis of ajmaline-type monoterpenoid indole alkaloids (MIAs) natural products, important plant-derived pharmaceuticals used in the therapy of heart disorders. Deacetylates 17-O-acetylnorajmaline to produce norajmaline. May also catalyze the conversion of 17-O-acetylajmaline to ajmaline. The polypeptide is Acetylajmalan esterase 1 (Rauvolfia serpentina (Serpentine wood)).